A 311-amino-acid polypeptide reads, in one-letter code: Coelenterazine h 2-monooxygenase (311 aa).

Residues 45–291 enclose the AB hydrolase-1 domain; the sequence is NAVIFLHGNA…KGLHFSQEDA (247 aa). Residues D162 and H285 each contribute to the substrate site.

As to quaternary structure, monomer.

It catalyses the reaction coelenterazine h + O2 = excited coelenteramide h monoanion + hnu + CO2 + H(+). Its function is as follows. Upon binding the substrate, the enzyme catalyzes an oxygenation, producing a very short-lived hydroperoxide that cyclizes into a dioxetanone structure, which collapses, releasing a CO(2) molecule. The spontaneous breakdown of the dioxetanone releases the energy (about 50 kcal/mole) that is necessary to generate the excited state of the coelenteramide product, which is the singlet form of the monoanion. In vivo the product undergoes the process of nonradiative energy transfer to an accessory protein, a green fluorescent protein (GFP), which results in green bioluminescence. In vitro, in the absence of GFP, the product emits blue light. The chain is Coelenterazine h 2-monooxygenase from Renilla reniformis (Sea pansy).